A 151-amino-acid chain; its full sequence is Ribosomal RNA large subunit methyltransferase H (151 aa).

S-adenosyl-L-methionine is bound by residues Leu-73, Gly-100, and Leu-119–Leu-124.

It belongs to the RNA methyltransferase RlmH family. In terms of assembly, homodimer.

It localises to the cytoplasm. The catalysed reaction is pseudouridine(1915) in 23S rRNA + S-adenosyl-L-methionine = N(3)-methylpseudouridine(1915) in 23S rRNA + S-adenosyl-L-homocysteine + H(+). In terms of biological role, specifically methylates the pseudouridine at position 1915 (m3Psi1915) in 23S rRNA. This Campylobacter lari (strain RM2100 / D67 / ATCC BAA-1060) protein is Ribosomal RNA large subunit methyltransferase H.